Reading from the N-terminus, the 302-residue chain is Sulfate adenylyltransferase subunit 2 (302 aa).

The segment at 280-302 (RQGRAIDHDQSGSMELKKRQGYF) is disordered.

Belongs to the PAPS reductase family. CysD subfamily. Heterodimer composed of CysD, the smaller subunit, and CysN.

The catalysed reaction is sulfate + ATP + H(+) = adenosine 5'-phosphosulfate + diphosphate. The protein operates within sulfur metabolism; hydrogen sulfide biosynthesis; sulfite from sulfate: step 1/3. Its function is as follows. With CysN forms the ATP sulfurylase (ATPS) that catalyzes the adenylation of sulfate producing adenosine 5'-phosphosulfate (APS) and diphosphate, the first enzymatic step in sulfur assimilation pathway. APS synthesis involves the formation of a high-energy phosphoric-sulfuric acid anhydride bond driven by GTP hydrolysis by CysN coupled to ATP hydrolysis by CysD. The protein is Sulfate adenylyltransferase subunit 2 of Vibrio parahaemolyticus serotype O3:K6 (strain RIMD 2210633).